We begin with the raw amino-acid sequence, 198 residues long: Nucleoid occlusion factor SlmA (198 aa).

The 62-residue stretch at 9–70 (RNRREEILQA…SLIEFIEDSL (62 aa)) folds into the HTH tetR-type domain. Positions 33 to 52 (TTAKLAANVGVSEAALYRHF) form a DNA-binding region, H-T-H motif. Residues 119 to 144 (DRLQGRINQLFERIEVQLRQVLREKK) adopt a coiled-coil conformation.

Belongs to the nucleoid occlusion factor SlmA family. As to quaternary structure, homodimer. Interacts with FtsZ.

The protein resides in the cytoplasm. It localises to the nucleoid. Its function is as follows. Required for nucleoid occlusion (NO) phenomenon, which prevents Z-ring formation and cell division over the nucleoid. Acts as a DNA-associated cell division inhibitor that binds simultaneously chromosomal DNA and FtsZ, and disrupts the assembly of FtsZ polymers. SlmA-DNA-binding sequences (SBS) are dispersed on non-Ter regions of the chromosome, preventing FtsZ polymerization at these regions. The polypeptide is Nucleoid occlusion factor SlmA (Yersinia enterocolitica serotype O:8 / biotype 1B (strain NCTC 13174 / 8081)).